The chain runs to 3001 residues: BEACH domain-containing protein C2 (3001 aa).

Disordered stretches follow at residues 43–80 (DFEQ…SSFG), 103–156 (DVQS…KATV), 1018–1076 (NVLA…NVGS), 1846–1868 (TFSS…PRDK), 2039–2071 (YSGT…SNPP), 2101–2132 (AEEH…RTSN), and 2193–2212 (NLAD…DRSW). Position 48 is a phosphoserine (S48). 3 stretches are compositionally biased toward polar residues: residues 57-72 (NESQ…FSNS), 121-132 (SMQQSLSETSLD), and 1037-1050 (SPYN…QLDS). Pro residues predominate over residues 1854-1863 (LEPPNNNAPP). Residues 2101–2119 (AEEHKRDEGRISGSHEHAS) are compositionally biased toward basic and acidic residues. Positions 2120-2129 (RTSAGNSDPR) are enriched in polar residues. In terms of domain architecture, BEACH-type PH spans 2151-2260 (ELDERILLEL…GRRNAYRAIV (110 aa)). The span at 2196 to 2211 (DHSDESQSGDQEKDRS) shows a compositional bias: basic and acidic residues. The 290-residue stretch at 2275–2564 (QRPEQLLRRT…QLLTVPHMKR (290 aa)) folds into the BEACH domain. 5 WD repeats span residues 2679-2718 (SGIR…TLET), 2721-2760 (GHCA…TSRT), 2802-2841 (GHRR…LIRR), 2842-2881 (LVGV…IAKA), and 2953-2992 (GQGQ…LKVV).

In Arabidopsis thaliana (Mouse-ear cress), this protein is BEACH domain-containing protein C2.